Reading from the N-terminus, the 930-residue chain is Probable SapB synthase (930 aa).

Positions tyrosine 256–arginine 516 constitute a Protein kinase domain. ATP is bound by residues leucine 262–valine 270 and lysine 285. Residue aspartate 395 is the Proton acceptor of the active site. Residues tyrosine 447 to aspartate 467 traverse the membrane as a helical segment. Over residues glycine 501–threonine 527 the composition is skewed to basic and acidic residues. 2 disordered regions span residues glycine 501–methionine 558 and proline 911–proline 930. Residues alanine 532–valine 546 show a composition bias toward low complexity. The span at arginine 547 to aspartate 556 shows a compositional bias: basic and acidic residues.

It in the N-terminal section; belongs to the protein kinase superfamily.

The protein resides in the cell membrane. In terms of biological role, required for aerial hyphae formation. Probably involved in processing the precursor of SapB to its mature form. The chain is Probable SapB synthase from Streptomyces coelicolor (strain ATCC BAA-471 / A3(2) / M145).